The following is a 340-amino-acid chain: Ferrochelatase (340 aa).

Positions 218 and 298 each coordinate Fe cation.

It belongs to the ferrochelatase family.

It localises to the cytoplasm. It carries out the reaction heme b + 2 H(+) = protoporphyrin IX + Fe(2+). It participates in porphyrin-containing compound metabolism; protoheme biosynthesis; protoheme from protoporphyrin-IX: step 1/1. In terms of biological role, catalyzes the ferrous insertion into protoporphyrin IX. The protein is Ferrochelatase of Wolbachia sp. subsp. Brugia malayi (strain TRS).